The primary structure comprises 435 residues: Eukaryotic peptide chain release factor subunit 1-3 (435 aa).

Ala2 carries the N-acetylalanine modification.

This sequence belongs to the eukaryotic release factor 1 family. As to quaternary structure, heterodimer of two subunits, one of which binds GTP.

The protein resides in the cytoplasm. In terms of biological role, directs the termination of nascent peptide synthesis (translation) in response to the termination codons UAA, UAG and UGA. Modulates plant growth and development. This Arabidopsis thaliana (Mouse-ear cress) protein is Eukaryotic peptide chain release factor subunit 1-3 (ERF1-3).